The sequence spans 97 residues: MSRACELTGKSVQYGNNVSHANNRTRCRFLPNLCNVTLISETLGQSYRLRISANALRSVEHRGGLDAFLVKSDDKELSQRARLLKRQIAKKQAEAAA.

Belongs to the bacterial ribosomal protein bL28 family.

This is Large ribosomal subunit protein bL28 from Brucella ovis (strain ATCC 25840 / 63/290 / NCTC 10512).